The primary structure comprises 221 residues: MANSGEEKLKLYSYWRSSCAHRVRIALALKGLDYEYIPVNLLKGDQFDSDFKKINPMGTVPALVDGDVVINDSFAIIMYLDEKYPEPPLLPRDLHKRAVNYQAMSIVLSGIQPHQNLAVIRYIEEKINVEEKTAWVNNAITKGFTALEKLLVNCAGKHATGDEIYLADLFLAPQIHGAINRFQINMEPYPTLAKCYESYNELPAFQNALPEKQPDAPSSTI.

The GST N-terminal domain occupies 7–88 (EKLKLYSYWR…YLDEKYPEPP (82 aa)). Glutathione is bound by residues 17–18 (SS), 17–22 (SSCAHR), Gln-46, 46–47 (QF), 59–60 (TV), Val-60, 72–73 (DS), Gln-112, and 116–118 (NLA). One can recognise a GST C-terminal domain in the interval 93-218 (DLHKRAVNYQ…LPEKQPDAPS (126 aa)).

This sequence belongs to the GST superfamily. Zeta family. As to quaternary structure, homodimer.

Its subcellular location is the cytoplasm. The protein localises to the cytosol. It carries out the reaction RX + glutathione = an S-substituted glutathione + a halide anion + H(+). In terms of biological role, acts a maleylacetone isomerase. Also catalyzes the glutathione-dependent dehalogenation of dichloroacetic acid to glyoxylic acid. In vitro, possesses glutathione peroxidase activity toward cumene hydroperoxide and linoleic acid-13-hydroperoxide. The sequence is that of Glutathione S-transferase Z1 (GSTZ1) from Arabidopsis thaliana (Mouse-ear cress).